The chain runs to 441 residues: Ribosomal protein uS12 methylthiotransferase RimO (441 aa).

Residues 8-118 (PKIGFVSLGC…VLEHVHHYSP (111 aa)) enclose the MTTase N-terminal domain. Positions 17, 53, 82, 150, 154, and 157 each coordinate [4Fe-4S] cluster. In terms of domain architecture, Radical SAM core spans 136 to 373 (LTPRHYAYLK…MQLQQQISAE (238 aa)). The 66-residue stretch at 376 to 441 (QEKVGREILV…DEYDLWGTRV (66 aa)) folds into the TRAM domain.

Belongs to the methylthiotransferase family. RimO subfamily. Requires [4Fe-4S] cluster as cofactor.

The protein resides in the cytoplasm. The enzyme catalyses L-aspartate(89)-[ribosomal protein uS12]-hydrogen + (sulfur carrier)-SH + AH2 + 2 S-adenosyl-L-methionine = 3-methylsulfanyl-L-aspartate(89)-[ribosomal protein uS12]-hydrogen + (sulfur carrier)-H + 5'-deoxyadenosine + L-methionine + A + S-adenosyl-L-homocysteine + 2 H(+). In terms of biological role, catalyzes the methylthiolation of an aspartic acid residue of ribosomal protein uS12. The protein is Ribosomal protein uS12 methylthiotransferase RimO of Klebsiella pneumoniae (strain 342).